We begin with the raw amino-acid sequence, 352 residues long: Serine/threonine-protein phosphatase 2A activator 2 (352 aa).

It belongs to the PTPA-type PPIase family.

The protein localises to the cytoplasm. It catalyses the reaction [protein]-peptidylproline (omega=180) = [protein]-peptidylproline (omega=0). In terms of biological role, PPIases accelerate the folding of proteins. It catalyzes the cis-trans isomerization of proline imidic peptide bonds in oligopeptides. Acts as a regulatory subunit for PP2A-like phosphatases modulating their activity or substrate specificity, probably by inducing a conformational change in the catalytic subunit, a direct target of the PPIase. Can reactivate inactive phosphatase PP2A-phosphatase methylesterase complexes (PP2Ai) in presence of ATP and Mg(2+) by dissociating the inactive form from the complex. This is Serine/threonine-protein phosphatase 2A activator 2 (rrd2) from Schizosaccharomyces pombe (strain 972 / ATCC 24843) (Fission yeast).